A 530-amino-acid chain; its full sequence is Ubiquitin carboxyl-terminal hydrolase 17-like protein 20 (530 aa).

Positions 80–375 (AGLQNMGNTC…QAYVLFYIQK (296 aa)) constitute a USP domain. Cysteine 89 serves as the catalytic Nucleophile. Catalysis depends on histidine 334, which acts as the Proton acceptor. Composition is skewed to basic and acidic residues over residues 382–392 (SESVSRGREPR) and 398–413 (DTDR…RDHP). Disordered regions lie at residues 382–413 (SESV…RDHP) and 509–530 (RGRA…LVCQ). A compositionally biased stretch (basic residues) spans 510-524 (GRARRSKGKNKHSKR).

This sequence belongs to the peptidase C19 family. USP17 subfamily.

Its subcellular location is the nucleus. The protein localises to the endoplasmic reticulum. It carries out the reaction Thiol-dependent hydrolysis of ester, thioester, amide, peptide and isopeptide bonds formed by the C-terminal Gly of ubiquitin (a 76-residue protein attached to proteins as an intracellular targeting signal).. Deubiquitinating enzyme that removes conjugated ubiquitin from specific proteins to regulate different cellular processes that may include cell proliferation, progression through the cell cycle, apoptosis, cell migration, and the cellular response to viral infection. This is Ubiquitin carboxyl-terminal hydrolase 17-like protein 20 (USP17L20) from Homo sapiens (Human).